The primary structure comprises 39 residues: uncharacterized protein (39 aa).

Residues 1 to 16 show a composition bias toward polar residues; the sequence is MLNIQPTQSIVNNQPK. Positions 1–39 are disordered; it reads MLNIQPTQSIVNNQPKSDQKKQKPADLLKEFYDKTGNRN. The span at 17–39 shows a compositional bias: basic and acidic residues; sequence SDQKKQKPADLLKEFYDKTGNRN.

This is an uncharacterized protein from Dictyostelium discoideum (Social amoeba).